Reading from the N-terminus, the 467-residue chain is MASSEVARHLLFQSHMATKTTCMSSQGSDDEQRKRENIRSLTMSDHVGFESLPDQLVNRSIQQGFCFNILCVGETGIGKSTLIDTLFNTNFEDYESSHFCPNVKLKAQTYELQESNVQLKLTIVNTVGFGDQINKEESYQPIVDYIDAQFEAYLQEELKIKRSLFTYHDSRIHVCLYFISPTGHSLKTLDLLTMKNLDSKVNIIPVIAKADTVSKTELQKFKIKLMSELVSNGVQIYQFPTDDDTIAKVNAAMNGQLPFAVVGSMDEVKVGNKMVKARQYPWGVVQVENENHCDFVKLREVLICTNMEDLREQTHTRHYELYRRCKLEEMGFTDVGPENKPVSLQETYEAKRHEFHGERQRKEEEMKQMFVQRVKEKEAILKEAERELQAKFEHLKRLHQEERMKLEEKRKLLEEEIIAFSKKKATSEIFHSQSFLATGSNLRKQPQLLIFMEKYFQVQGQYVSQSE.

The Septin-type G domain maps to 63 to 329 (QGFCFNILCV…ELYRRCKLEE (267 aa)). The tract at residues 73-80 (GETGIGKS) is G1 motif. GTP contacts are provided by residues 73–80 (GETGIGKS), glycine 128, 209–217 (KADTVSKTE), glycine 263, and arginine 278. The segment at 125–128 (NTVG) is G3 motif. Positions 208–211 (AKAD) are G4 motif.

Belongs to the TRAFAC class TrmE-Era-EngA-EngB-Septin-like GTPase superfamily. Septin GTPase family. Septins polymerize into heterooligomeric protein complexes that form filaments, and can associate with cellular membranes, actin filaments and microtubules. GTPase activity is required for filament formation. Interacts with ADGB. Proteolytically cleaved in vitro in a calmodulin-dependent manner.

The protein resides in the cytoplasm. It localises to the cytoskeleton. The protein localises to the cell projection. It is found in the cilium. Its subcellular location is the flagellum. In terms of biological role, filament-forming cytoskeletal GTPase. May play a role in cytokinesis (Potential). The polypeptide is Septin-10 (Pongo abelii (Sumatran orangutan)).